The sequence spans 332 residues: Holliday junction branch migration complex subunit RuvB (332 aa).

The tract at residues 1 to 181 (MSRILDNEIM…FGITGHMEYY (181 aa)) is large ATPase domain (RuvB-L). Residues leucine 20, arginine 21, glycine 62, lysine 65, threonine 66, threonine 67, 128–130 (EDF), arginine 171, tyrosine 181, and arginine 218 contribute to the ATP site. Threonine 66 provides a ligand contact to Mg(2+). A small ATPAse domain (RuvB-S) region spans residues 182 to 252 (AHADLTEIVE…ITDKALTMLD (71 aa)). Positions 255 to 332 (HEGLDYVDQK…EHLGYEYSEK (78 aa)) are head domain (RuvB-H). Residues arginine 291, arginine 310, arginine 312, and arginine 315 each coordinate DNA.

This sequence belongs to the RuvB family. As to quaternary structure, homohexamer. Forms an RuvA(8)-RuvB(12)-Holliday junction (HJ) complex. HJ DNA is sandwiched between 2 RuvA tetramers; dsDNA enters through RuvA and exits via RuvB. An RuvB hexamer assembles on each DNA strand where it exits the tetramer. Each RuvB hexamer is contacted by two RuvA subunits (via domain III) on 2 adjacent RuvB subunits; this complex drives branch migration. In the full resolvosome a probable DNA-RuvA(4)-RuvB(12)-RuvC(2) complex forms which resolves the HJ.

The protein resides in the cytoplasm. It carries out the reaction ATP + H2O = ADP + phosphate + H(+). In terms of biological role, the RuvA-RuvB-RuvC complex processes Holliday junction (HJ) DNA during genetic recombination and DNA repair, while the RuvA-RuvB complex plays an important role in the rescue of blocked DNA replication forks via replication fork reversal (RFR). RuvA specifically binds to HJ cruciform DNA, conferring on it an open structure. The RuvB hexamer acts as an ATP-dependent pump, pulling dsDNA into and through the RuvAB complex. RuvB forms 2 homohexamers on either side of HJ DNA bound by 1 or 2 RuvA tetramers; 4 subunits per hexamer contact DNA at a time. Coordinated motions by a converter formed by DNA-disengaged RuvB subunits stimulates ATP hydrolysis and nucleotide exchange. Immobilization of the converter enables RuvB to convert the ATP-contained energy into a lever motion, pulling 2 nucleotides of DNA out of the RuvA tetramer per ATP hydrolyzed, thus driving DNA branch migration. The RuvB motors rotate together with the DNA substrate, which together with the progressing nucleotide cycle form the mechanistic basis for DNA recombination by continuous HJ branch migration. Branch migration allows RuvC to scan DNA until it finds its consensus sequence, where it cleaves and resolves cruciform DNA. The protein is Holliday junction branch migration complex subunit RuvB of Streptococcus pneumoniae serotype 2 (strain D39 / NCTC 7466).